The sequence spans 126 residues: Protein C10 (126 aa).

Alanine 2 bears the N-acetylalanine mark.

Belongs to the UPF0456 family. As to expression, ubiquitously expressed, with higher expression in lung and fetal brain.

It localises to the cytoplasm. In brain, may be required for corpus callosum development. The protein is Protein C10 (C12orf57) of Homo sapiens (Human).